The sequence spans 273 residues: Formamidopyrimidine-DNA glycosylase (273 aa).

Residue Pro2 is the Schiff-base intermediate with DNA of the active site. Catalysis depends on Glu3, which acts as the Proton donor. Lys59 serves as the catalytic Proton donor; for beta-elimination activity. Residues His92 and Arg111 each contribute to the DNA site. The segment at 239–273 (KVYGKTGEPCVICGTPIEKIKLNGRGTHFCPHCQK) adopts an FPG-type zinc-finger fold. Catalysis depends on Arg263, which acts as the Proton donor; for delta-elimination activity.

Belongs to the FPG family. In terms of assembly, monomer. Requires Zn(2+) as cofactor.

The catalysed reaction is Hydrolysis of DNA containing ring-opened 7-methylguanine residues, releasing 2,6-diamino-4-hydroxy-5-(N-methyl)formamidopyrimidine.. The enzyme catalyses 2'-deoxyribonucleotide-(2'-deoxyribose 5'-phosphate)-2'-deoxyribonucleotide-DNA = a 3'-end 2'-deoxyribonucleotide-(2,3-dehydro-2,3-deoxyribose 5'-phosphate)-DNA + a 5'-end 5'-phospho-2'-deoxyribonucleoside-DNA + H(+). Its function is as follows. Involved in base excision repair of DNA damaged by oxidation or by mutagenic agents. Acts as a DNA glycosylase that recognizes and removes damaged bases. Has a preference for oxidized purines, such as 7,8-dihydro-8-oxoguanine (8-oxoG). Has AP (apurinic/apyrimidinic) lyase activity and introduces nicks in the DNA strand. Cleaves the DNA backbone by beta-delta elimination to generate a single-strand break at the site of the removed base with both 3'- and 5'-phosphates. This chain is Formamidopyrimidine-DNA glycosylase, found in Listeria innocua serovar 6a (strain ATCC BAA-680 / CLIP 11262).